A 272-amino-acid polypeptide reads, in one-letter code: Replication-associated protein A (272 aa).

In terms of domain architecture, CRESS-DNA virus Rep endonuclease spans 11–114; that stretch reads SHRNANTFLT…PLAVFERGTF (104 aa). Positions 18-21 match the RCR-1 motif; sequence FLTY. A divalent metal cation contacts are provided by E52, H60, and H62. Positions 60-62 match the RCR-2 motif; it reads HLH. Y100 (for DNA cleavage activity) is an active-site residue. The short motif at 100–103 is the RCR-3 element; sequence YILK. Residue E104 participates in a divalent metal cation binding. The oligomerization stretch occupies residues 175–187; it reads SANKLFPEIQEEF. The interval 198–202 is binding to RBR1; it reads LLCNE. The interval 221-230 is transactivation; that stretch reads MLLQPTCYTL. The interval 245 to 272 is disordered; it reads SHQMKDQESRASTSSAQQEPENLLGPEA. The span at 254 to 264 shows a compositional bias: polar residues; sequence RASTSSAQQEP.

The protein belongs to the geminiviridae Rep protein family. In terms of assembly, homooligomer. Interacts with host retinoblastoma-related protein 1 (RBR1), and may thereby deregulate the host cell cycle. Part of the C- and V-complexes which are RepA-Rep-DNA complexes involved in the c-sense and v-sense transcription. The cofactor is Mg(2+). It depends on Mn(2+) as a cofactor.

Its subcellular location is the host nucleus. It is found in the host cytoplasm. Functionally, implicated in enhancement of V-sense gene expression. Acts a an inhibitor of C-sense gene transcription. The sequence is that of Replication-associated protein A from Maize streak virus genotype A (isolate Nigeria) (MSV).